Here is a 152-residue protein sequence, read N- to C-terminus: Large ribosomal subunit protein uL15 (152 aa).

Residues 1–79 (MRLNELSPPP…GRHTPAHPKV (79 aa)) are disordered. Residues 22–35 (GEGSGYGKTSGRGQ) are compositionally biased toward gly residues.

It belongs to the universal ribosomal protein uL15 family. In terms of assembly, part of the 50S ribosomal subunit.

In terms of biological role, binds to the 23S rRNA. In Rubrobacter xylanophilus (strain DSM 9941 / JCM 11954 / NBRC 16129 / PRD-1), this protein is Large ribosomal subunit protein uL15.